The primary structure comprises 63 residues: Hyphancin-3D (63 aa).

An N-terminal signal peptide occupies residues 1–22 (MNFSRIIFLVFACFVALASVSA). Positions 23 to 26 (APEP) are cleaved as a propeptide — removed by a dipeptidylpeptidase. Leu-61 carries the leucine amide modification.

The protein belongs to the cecropin family.

Its subcellular location is the secreted. In terms of biological role, has antibacterial activity. This is Hyphancin-3D from Hyphantria cunea (Fall webworm moth).